The primary structure comprises 622 residues: Chaperone protein HscA homolog (622 aa).

It belongs to the heat shock protein 70 family.

Functionally, chaperone involved in the maturation of iron-sulfur cluster-containing proteins. Has a low intrinsic ATPase activity which is markedly stimulated by HscB. This is Chaperone protein HscA homolog from Burkholderia cenocepacia (strain ATCC BAA-245 / DSM 16553 / LMG 16656 / NCTC 13227 / J2315 / CF5610) (Burkholderia cepacia (strain J2315)).